The chain runs to 410 residues: LL-diaminopimelate aminotransferase (410 aa).

Tyr-15 and Gly-42 together coordinate substrate. Pyridoxal 5'-phosphate is bound by residues Tyr-72, 108–109 (AK), Tyr-132, Asn-188, Tyr-219, and 247–249 (SFS). Substrate is bound by residues Lys-109, Tyr-132, and Asn-188. Lys-250 carries the N6-(pyridoxal phosphate)lysine modification. Pyridoxal 5'-phosphate contacts are provided by Arg-258 and Asn-293. The substrate site is built by Asn-293 and Arg-389.

Belongs to the class-I pyridoxal-phosphate-dependent aminotransferase family. LL-diaminopimelate aminotransferase subfamily. In terms of assembly, homodimer. The cofactor is pyridoxal 5'-phosphate.

The catalysed reaction is (2S,6S)-2,6-diaminopimelate + 2-oxoglutarate = (S)-2,3,4,5-tetrahydrodipicolinate + L-glutamate + H2O + H(+). The protein operates within amino-acid biosynthesis; L-lysine biosynthesis via DAP pathway; LL-2,6-diaminopimelate from (S)-tetrahydrodipicolinate (aminotransferase route): step 1/1. In terms of biological role, involved in the synthesis of meso-diaminopimelate (m-DAP or DL-DAP), required for both lysine and peptidoglycan biosynthesis. Catalyzes the direct conversion of tetrahydrodipicolinate to LL-diaminopimelate. Can also use m-DAP instead of LL-DAP as the amino-group donor. The protein is LL-diaminopimelate aminotransferase of Bacteroides fragilis (strain ATCC 25285 / DSM 2151 / CCUG 4856 / JCM 11019 / LMG 10263 / NCTC 9343 / Onslow / VPI 2553 / EN-2).